Reading from the N-terminus, the 320-residue chain is Cytochrome f (320 aa).

The signal sequence occupies residues 1 to 35 (MQTRNTFSWIREEITRSISVSLIIYIITRASISSA). Residues tyrosine 36, cysteine 56, cysteine 59, and histidine 60 each contribute to the heme site. A helical membrane pass occupies residues 286–306 (VQGLLFFLASVVLAQIFLVLK).

This sequence belongs to the cytochrome f family. As to quaternary structure, the 4 large subunits of the cytochrome b6-f complex are cytochrome b6, subunit IV (17 kDa polypeptide, petD), cytochrome f and the Rieske protein, while the 4 small subunits are PetG, PetL, PetM and PetN. The complex functions as a dimer. It depends on heme as a cofactor.

It localises to the plastid. Its subcellular location is the chloroplast thylakoid membrane. Component of the cytochrome b6-f complex, which mediates electron transfer between photosystem II (PSII) and photosystem I (PSI), cyclic electron flow around PSI, and state transitions. The polypeptide is Cytochrome f (Draba nemorosa (Woodland whitlowgrass)).